Consider the following 263-residue polypeptide: Small ribosomal subunit protein eS4 (263 aa).

Positions 42-104 (LPLIVFLRNR…TGEHFRLVYD (63 aa)) constitute an S4 RNA-binding domain.

The protein belongs to the eukaryotic ribosomal protein eS4 family.

In Pongo pygmaeus (Bornean orangutan), this protein is Small ribosomal subunit protein eS4 (RPS4Y1).